A 338-amino-acid chain; its full sequence is HLA class I histocompatibility antigen, alpha chain G (338 aa).

Positions 1-24 (MVVMAPRTLFLLLSGALTLTETWA) are cleaved as a signal peptide. The segment at 3 to 11 (VMAPRTLFL) is VL9 epitope. The alpha-1 stretch occupies residues 25 to 114 (GSHSMRYFSA…LRGYYNQSEA (90 aa)). Residues 25–308 (GSHSMRYFSA…KQSSLPTIPI (284 aa)) lie on the Extracellular side of the membrane. A peptide antigen-binding residues include Tyr31, His94, Asn101, and Tyr108. Residue Asn110 is glycosylated (N-linked (GlcNAc...) asparagine). The segment at 115-206 (SSHTLQWMIG…ENGKEMLQRA (92 aa)) is alpha-2. Cys125 and Cys188 form a disulfide bridge. A peptide antigen-binding residues include Ser167, Lys170, Gln179, Arg180, Tyr183, and Tyr195. Positions 207 to 298 (DPPKTHVTHH…GLPEPLMLRW (92 aa)) are alpha-3. In terms of domain architecture, Ig-like C1-type spans 209–299 (PKTHVTHHPV…LPEPLMLRWK (91 aa)). Cys227 and Cys283 are joined by a disulfide. The tract at residues 299–308 (KQSSLPTIPI) is connecting peptide. The chain crosses the membrane as a helical span at residues 309–332 (MGIVAGLVVLAAVVTGAAVAAVLW). Topologically, residues 333–338 (RKKSSD) are cytoplasmic. The ER-retrieval signal signature appears at 334–336 (KKS).

Belongs to the MHC class I family. Forms a heterotrimer with B2M and a self-peptide (peptide-bound HLA-G-B2M). HLA-G-B2M complex interacts with components of the antigen processing machinery TAPBP and TAP1-TAP2 complex; this interaction is required for loading of high affinity peptides and heterotrimer translocation to the cell surface. Interacts with CALCR; this interaction is required for appropriate folding. Interacts with COPB1; this interaction mediates the endoplasmic reticulum (ER) retrieval of HLA-G-B2M complexes that bind low affinity peptides. On the cell surface, peptide-bound HLA-G-B2M molecules (referred to as monomers) can form disulfide-linked homomultimers, homodimers and homotrimers. Interacts with KIR2DL4; this interaction is direct. Interacts with LILRB1 and LILRB2 receptors; this interaction is direct. Interacts with CD160; this interactions is direct. Interacts with CD8A homodimer; this interaction is direct and might down-regulate T cell receptor signaling. Isoform 2: Forms a non-disulfide-linked homodimer and interacts with LILRB2. In terms of processing, N-glycosylated. Produced by proteolytic cleavage at the cell surface (shedding) by matrix metalloproteinase MMP2. Expressed in adult eye. Expressed in immune cell subsets including monocytes, myeloid and plasmacytoid dendritic cells and regulatory T cells (Tr1)(at protein level). Secreted by follicular dendritic cell and follicular helper T cells. As to expression, detected in physiological fluids including amniotic fluid and serum. In terms of tissue distribution, expressed in placenta, amniotic membrane, skin, cord blood and peripheral blood mononuclear cells.

It localises to the cell membrane. The protein localises to the endoplasmic reticulum membrane. The protein resides in the early endosome membrane. Its subcellular location is the secreted. It is found in the early endosome. It localises to the cell projection. The protein localises to the filopodium membrane. In terms of biological role, non-classical major histocompatibility class Ib molecule involved in immune regulatory processes at the maternal-fetal interface. In complex with B2M/beta-2 microglobulin binds a limited repertoire of nonamer self-peptides derived from intracellular proteins including histones and ribosomal proteins. Peptide-bound HLA-G-B2M complex acts as a ligand for inhibitory/activating KIR2DL4, LILRB1 and LILRB2 receptors on uterine immune cells to promote fetal development while maintaining maternal-fetal tolerance. Upon interaction with KIR2DL4 and LILRB1 receptors on decidual NK cells, it triggers NK cell senescence-associated secretory phenotype as a molecular switch to promote vascular remodeling and fetal growth in early pregnancy. Through interaction with KIR2DL4 receptor on decidual macrophages induces pro-inflammatory cytokine production mainly associated with tissue remodeling. Through interaction with LILRB2 receptor triggers differentiation of type 1 regulatory T cells and myeloid-derived suppressor cells, both of which actively maintain maternal-fetal tolerance. May play a role in balancing tolerance and antiviral-immunity at maternal-fetal interface by keeping in check the effector functions of NK, CD8+ T cells and B cells. Reprograms B cells toward an immune suppressive phenotype via LILRB1. May induce immune activation/suppression via intercellular membrane transfer (trogocytosis), likely enabling interaction with KIR2DL4, which resides mostly in endosomes. Through interaction with the inhibitory receptor CD160 on endothelial cells may control angiogenesis in immune privileged sites. Likely does not bind B2M and presents peptides. Negatively regulates NK cell- and CD8+ T cell-mediated cytotoxicity. Its function is as follows. Non-classical major histocompatibility class Ib molecule involved in immune regulatory processes at the maternal-fetal interface. In complex with B2M/beta-2 microglobulin binds a limited repertoire of nonamer self-peptides derived from intracellular proteins including histones and ribosomal proteins. Peptide-bound HLA-G-B2M complex acts as a ligand for inhibitory/activating KIR2DL4, LILRB1 and LILRB2 receptors on uterine immune cells to promote fetal development while maintaining maternal-fetal tolerance. Upon interaction with KIR2DL4 and LILRB1 receptors on decidual NK cells, it triggers NK cell senescence-associated secretory phenotype as a molecular switch to promote vascular remodeling and fetal growth in early pregnancy. Through interaction with KIR2DL4 receptor on decidual macrophages induces pro-inflammatory cytokine production mainly associated with tissue remodeling. Through interaction with LILRB2 receptor triggers differentiation of type 1 regulatory T cells and myeloid-derived suppressor cells, both of which actively maintain maternal-fetal tolerance. Reprograms B cells toward an immune suppressive phenotype via LILRB1. Functionally, likely does not bind B2M and presents peptides. The protein is HLA class I histocompatibility antigen, alpha chain G of Homo sapiens (Human).